Reading from the N-terminus, the 1035-residue chain is DNA polymerase I B, mitochondrial (1035 aa).

The transit peptide at Met1–Ala42 directs the protein to the mitochondrion. Residues Thr100–Tyr124 are disordered. Residues Leu111–Arg120 are compositionally biased toward basic and acidic residues. A 3'-5' exonuclease domain is found at Phe317–Glu478. The tract at residues His699–Tyr1032 is polymerase.

Belongs to the DNA polymerase type-A family.

Its subcellular location is the mitochondrion. It catalyses the reaction DNA(n) + a 2'-deoxyribonucleoside 5'-triphosphate = DNA(n+1) + diphosphate. Not inhibited by aphidicolin. Functionally, in addition to polymerase activity, this DNA polymerase exhibits 5'-3' exonuclease activity. May be required for DNA replication and accumulation in mitochondria. The protein is DNA polymerase I B, mitochondrial of Oryza sativa subsp. japonica (Rice).